We begin with the raw amino-acid sequence, 133 residues long: MSNHDPISDMLTRIRNASQKKHTTTTIPGSKMSLSIAKVLQKEGFISDINEEGEGYKSQIILGLKYSGKNKFPTIRSMQRVSKPGLRIYKNTRGLPKVLGGLGVAIISTSKGVMSDRDARKQGIGGEVLCYVY.

Belongs to the universal ribosomal protein uS8 family. Part of the 30S ribosomal subunit. Contacts proteins S5 and S12.

Its function is as follows. One of the primary rRNA binding proteins, it binds directly to 16S rRNA central domain where it helps coordinate assembly of the platform of the 30S subunit. The protein is Small ribosomal subunit protein uS8 of Prochlorococcus marinus (strain AS9601).